Consider the following 126-residue polypeptide: Protein chibby homolog 1 (126 aa).

The segment covering M1–P10 has biased composition (polar residues). Residues M1–S26 are disordered. Residues S9 and S20 each carry the phosphoserine modification. Residues I60–M112 are minimal region for the interaction with PKD2. The stretch at G67 to R125 forms a coiled coil. Residues L77–L98 are leucine-zipper; mediates homodimerization.

This sequence belongs to the chibby family. As to quaternary structure, homodimer. Homodimerization is essential for nuclear localization and interaction with KPNA4 but is dispensable for interaction with CTNNB1. Interacts with polycystin-2/PKD2 and GM130. Interacts with the C-terminal region of CTNNB1. Interacts (C-terminus) with TCIM (C-terminus), TCIM competes with CTNNB1 for the interaction with CBY1. Interacts with FAM92A; this interaction facilitates targeting of FAM92A to cilium basal body. Interacts with CIBAR2. Interacts with KPNA4. Widely expressed. Expressed at higher levels in heart, skeletal muscle, kidney and placenta. Also found in brain, lung, liver and testis. Significantly down-regulated in thyroid and metastatic uterine tumors.

The protein localises to the nucleus speckle. It localises to the cytoplasm. It is found in the cytoskeleton. The protein resides in the cilium basal body. Its subcellular location is the microtubule organizing center. The protein localises to the centrosome. It localises to the centriole. It is found in the golgi apparatus. The protein resides in the trans-Golgi network. Its subcellular location is the cell projection. The protein localises to the cilium. It localises to the flagellum. It is found in the nucleus. Functionally, inhibits the Wnt/Wingless pathway by binding to CTNNB1/beta-catenin and inhibiting beta-catenin-mediated transcriptional activation through competition with TCF/LEF transcription factors. Has also been shown to play a role in regulating the intracellular trafficking of polycystin-2/PKD2 and possibly of other intracellular proteins. Promotes adipocyte and cardiomyocyte differentiation. This Homo sapiens (Human) protein is Protein chibby homolog 1 (CBY1).